The following is a 375-amino-acid chain: Ferredoxin--NADP reductase, root-type isozyme, chloroplastic (375 aa).

The N-terminal 60 residues, Met1–Met60, are a transit peptide targeting the chloroplast. An FAD-binding FR-type domain is found at Lys91–Leu219. FAD-binding positions include Arg151 to Leu154, Cys172 to Arg174, Tyr178, Val193 to Ser195, and Thr235. Residue Arg174 participates in NADP(+) binding. NADP(+)-binding positions include Thr235, Val266–Ala267, Ser296–Arg297, Lys306, Gly334–Leu335, and Glu373.

This sequence belongs to the ferredoxin--NADP reductase type 1 family. The cofactor is FAD.

The protein localises to the plastid. It localises to the chloroplast. It catalyses the reaction 2 reduced [2Fe-2S]-[ferredoxin] + NADP(+) + H(+) = 2 oxidized [2Fe-2S]-[ferredoxin] + NADPH. It functions in the pathway energy metabolism; photosynthesis. Its function is as follows. May play a key role in regulating the relative amounts of cyclic and non-cyclic electron flow to meet the demands of the plant for ATP and reducing power. Is involved in nitrate assimilation. This chain is Ferredoxin--NADP reductase, root-type isozyme, chloroplastic, found in Nicotiana tabacum (Common tobacco).